The chain runs to 384 residues: MSWQEKINAALDARRAADALRRRYPVAQGAGRWLVADDRQYLNFSSNDYLGLSHHPQIIRAWQQGAEQFGVGSGGSGHVSGYSVAHQALEEELAEWLGYSRALLFISGFAANQAVIAAMMAKEDRIVADRLSHASLLEAASLSPSQLRRFAHNDVTHLARLLASPCPGQQLVVTEGVFSMDGDSAPLAEIQQVTQQHNGWLMVDDAHGTGVIGEQGRGSCWLQKVKPELLVVTFGKGFGVSGAAVLCSSTVADYLLQFARHLIYSTSMPPAQAQALRASLAVIRRDEGDARREKLVSLIARFRAGVQDLPFTLADSCSAIQPLIVGDNSRALQLAEKLRQQGCWVTAIRPPTVPAGTARLRLTLTAAHEMQDIDRLLEVLHGNG.

Substrate is bound at residue arginine 21. 108 to 109 (GF) contacts pyridoxal 5'-phosphate. Histidine 133 contributes to the substrate binding site. Positions 179, 207, and 233 each coordinate pyridoxal 5'-phosphate. Residue lysine 236 is modified to N6-(pyridoxal phosphate)lysine. Position 352 (threonine 352) interacts with substrate.

This sequence belongs to the class-II pyridoxal-phosphate-dependent aminotransferase family. BioF subfamily. Homodimer. Pyridoxal 5'-phosphate serves as cofactor.

It carries out the reaction 6-carboxyhexanoyl-[ACP] + L-alanine + H(+) = (8S)-8-amino-7-oxononanoate + holo-[ACP] + CO2. The protein operates within cofactor biosynthesis; biotin biosynthesis. In terms of biological role, catalyzes the decarboxylative condensation of pimeloyl-[acyl-carrier protein] and L-alanine to produce 8-amino-7-oxononanoate (AON), [acyl-carrier protein], and carbon dioxide. The chain is 8-amino-7-oxononanoate synthase from Escherichia coli (strain SE11).